Here is a 392-residue protein sequence, read N- to C-terminus: Frizzled-9 (392 aa).

Residues 1–35 (ACDNPEKFQYVEKSLSCAPRCSPGVDVYWSREDKD) are Extracellular-facing. A helical transmembrane segment spans residues 36-56 (FAFVWMAVWSTLCFVSTAFTV). Residues 57-72 (LTFLLDPHRFQYPERP) lie on the Cytoplasmic side of the membrane. The chain crosses the membrane as a helical span at residues 73–93 (IIFLSMCYNVYSVAFIIRSVA). Residues 94–119 (GAETIACDRENGELYIIQEGLESTGC) lie on the Extracellular side of the membrane. The helical transmembrane segment at 120 to 140 (TIVFLILYYFGMASSLWWVVL) threads the bilayer. Residues 141-161 (TLTWFLAAGKKWGHEAIEAHS) are Cytoplasmic-facing. The chain crosses the membrane as a helical span at residues 162-182 (SYFHMAAWGIPAMKTIVILTM). Residues 183–206 (RKVAGDELTGLCYVGSMDVSALTG) lie on the Extracellular side of the membrane. The chain crosses the membrane as a helical span at residues 207 to 227 (FVLIPLSCYLVVGTSFILTGF). Residues 228 to 253 (VALFHIRKIMKTGGTNTEKLEKLMVK) are Cytoplasmic-facing. Residues 254–274 (IGVFSILYTVPATCVIVCYFY) form a helical membrane-spanning segment. Residues 275–312 (ERLNVDYWNLRALERACVPLPGRRAADCSLEASVPTVA) are Extracellular-facing. A helical transmembrane segment spans residues 313–333 (VFMLKIFMSLVVGITSGVWVW). Over 334–392 (SSKTLQTWQSLCNRKLGVRTRGKPCSGVSCGGVHCHYKAPTVMLHMTKTDPYLDNPTHV) the chain is Cytoplasmic. The short motif at 336 to 341 (KTLQTW) is the Lys-Thr-X-X-X-Trp motif, mediates interaction with the PDZ domain of Dvl family members element. The short motif at 390-392 (THV) is the PDZ-binding element.

It belongs to the G-protein coupled receptor Fz/Smo family.

Its subcellular location is the cell membrane. Receptor for WNT2 that is coupled to the beta-catenin canonical signaling pathway, which leads to the activation of disheveled proteins, inhibition of GSK-3 kinase, nuclear accumulation of beta-catenin and activation of Wnt target genes. This Gallus gallus (Chicken) protein is Frizzled-9 (FZD9).